A 266-amino-acid chain; its full sequence is MAGVKKNRSPRKPTKLLQSRLKFAHSSATLKKCTECQMSYIIDSPADCAEHKKYHDLHLYGKKWLASWGTAIQDTCSSQYITPPSTSGGNASGNGAKADREDYIVYITPGKTAEVKAMMEIMYIVNNELTAPHDENDFWSEEGTSSMGRAFVYIKDGRAVGAITVEYLKEDDSRGRWMRVSTRELVPEVVPRVRLGISRIWVCRKQRGQGIATRLLECVRKYAILGNEVARWEMAWSQPSESGGKLATRYNSVRHKSGELLIPCYI.

Residues 31–55 (KKCTECQMSYIIDSPADCAEHKKYH) form a CCHH-type zinc finger. Residues 108–266 (TPGKTAEVKA…SGELLIPCYI (159 aa)) enclose the N-acetyltransferase domain.

The protein belongs to the acetyltransferase family. ECO subfamily.

It is found in the nucleus. Functionally, probable acetyltransferase required for the establishment of sister chromatid cohesion and couple the processes of cohesion and DNA replication to ensure that only sister chromatids become paired together. In contrast to the structural cohesins, the deposition and establishment factors are required only during S phase. Acts by acetylating the cohesin complex component SMC3. The polypeptide is N-acetyltransferase ECO1 (ECO1) (Eremothecium gossypii (strain ATCC 10895 / CBS 109.51 / FGSC 9923 / NRRL Y-1056) (Yeast)).